We begin with the raw amino-acid sequence, 86 residues long: Anti-adapter protein IraP (86 aa).

Positions 1–36 (MKNLIAELLLKLAQKEEESKELVAQVEALEIIVTAM) form a coiled coil.

The protein belongs to the IraP family. Interacts with RssB.

Its subcellular location is the cytoplasm. In terms of biological role, inhibits RpoS proteolysis by regulating RssB activity, thereby increasing the stability of the sigma stress factor RpoS especially during phosphate and magnesium starvation, but also in stationary phase and during nitrogen starvation. Its effect on RpoS stability is due to its interaction with RssB, which probably blocks the interaction of RssB with RpoS, and the consequent delivery of the RssB-RpoS complex to the ClpXP protein degradation pathway. In Salmonella choleraesuis (strain SC-B67), this protein is Anti-adapter protein IraP.